The following is a 528-amino-acid chain: GMP synthase [glutamine-hydrolyzing] (528 aa).

One can recognise a Glutamine amidotransferase type-1 domain in the interval 13–204 (SILILDFGSQ…VYGISSCVAD (192 aa)). Residue Cys-90 is the Nucleophile of the active site. Catalysis depends on residues His-178 and Glu-180. Residues 205-403 (WTTETYIEET…LGLPDEIIKR (199 aa)) form the GMPS ATP-PPase domain. 232 to 238 (SGGVDSS) is a binding site for ATP.

Homodimer.

It carries out the reaction XMP + L-glutamine + ATP + H2O = GMP + L-glutamate + AMP + diphosphate + 2 H(+). It participates in purine metabolism; GMP biosynthesis; GMP from XMP (L-Gln route): step 1/1. In terms of biological role, catalyzes the synthesis of GMP from XMP. This chain is GMP synthase [glutamine-hydrolyzing], found in Prochlorococcus marinus (strain MIT 9312).